We begin with the raw amino-acid sequence, 846 residues long: Outer membrane channel protein CpnT (846 aa).

Residues 1–443 (MAPLAVDPAA…AGVRGLKERL (443 aa)) form an NTD region. Residues 442–630 (RLEPTTPHLE…SGSEPPGLHA (189 aa)) are disordered. Pro residues-rich tracts occupy residues 450–466 (LEPP…PPRI) and 475–504 (APAP…PPVD). Low complexity-rich tracts occupy residues 508-517 (EPVAPSSASA) and 562-586 (APAT…HSTP). The segment at 651 to 846 (RLSDEAVDPQ…ELIRRGVLRQ (196 aa)) is TNT. The 96-residue stretch at 751 to 846 (YGPQLDRIGG…ELIRRGVLRQ (96 aa)) folds into the TNT domain. Residue R757 is part of the active site. Residue R780 coordinates NAD(+). Q822 is an active-site residue.

Interacts with the immunity factor for TNT (IFT) homolog. In terms of processing, the C-terminal domain (TNT) is probably cleaved.

It is found in the cell outer membrane. The protein localises to the secreted. It localises to the cell surface. It carries out the reaction NAD(+) + H2O = ADP-D-ribose + nicotinamide + H(+). With respect to regulation, glycohydrolase activity is completely inhibited by interaction with the immunity factor for TNT (IFT) homolog. This inhibition protects M.bovis from self-poisoning. Functionally, the N-terminal domain (NTD) forms an outer membrane channel and is used for uptake of nutrients across the outer membrane. Also confers susceptibility to structurally different antibiotics and antituberculosis drugs, and to toxic immune factors such as nitric oxide (NO). The C-terminal domain (TNT) is dispensable for normal growth in macrophages. The chain is Outer membrane channel protein CpnT from Mycobacterium bovis (strain BCG / Pasteur 1173P2).